A 349-amino-acid polypeptide reads, in one-letter code: Methionine import ATP-binding protein MetN (349 aa).

Positions I5–V245 constitute an ABC transporter domain. ATP is bound at residue G37 to S44.

The protein belongs to the ABC transporter superfamily. Methionine importer (TC 3.A.1.24) family. The complex is composed of two ATP-binding proteins (MetN), two transmembrane proteins (MetI) and a solute-binding protein (MetQ).

The protein resides in the cell membrane. The catalysed reaction is L-methionine(out) + ATP + H2O = L-methionine(in) + ADP + phosphate + H(+). It catalyses the reaction D-methionine(out) + ATP + H2O = D-methionine(in) + ADP + phosphate + H(+). In terms of biological role, part of the ABC transporter complex MetNIQ involved in methionine import. Responsible for energy coupling to the transport system. This is Methionine import ATP-binding protein MetN from Lactobacillus johnsonii (strain CNCM I-12250 / La1 / NCC 533).